We begin with the raw amino-acid sequence, 141 residues long: Large ribosomal subunit protein uL11 (141 aa).

This sequence belongs to the universal ribosomal protein uL11 family. Part of the ribosomal stalk of the 50S ribosomal subunit. Interacts with L10 and the large rRNA to form the base of the stalk. L10 forms an elongated spine to which L12 dimers bind in a sequential fashion forming a multimeric L10(L12)X complex. One or more lysine residues are methylated.

Its function is as follows. Forms part of the ribosomal stalk which helps the ribosome interact with GTP-bound translation factors. This is Large ribosomal subunit protein uL11 from Fervidobacterium nodosum (strain ATCC 35602 / DSM 5306 / Rt17-B1).